A 369-amino-acid polypeptide reads, in one-letter code: Mitogen-activated protein kinase 4 (369 aa).

A Protein kinase domain is found at 32 to 319 (YVPIKPIGRG…VTEALEHPYM (288 aa)). ATP is bound by residues 38 to 46 (IGRGAYGIV) and lysine 61. The Proton acceptor role is filled by aspartate 158. Threonine 191 is subject to Phosphothreonine. The TXY signature appears at 191 to 193 (TEY). Residue tyrosine 193 is modified to Phosphotyrosine.

This sequence belongs to the protein kinase superfamily. CMGC Ser/Thr protein kinase family. MAP kinase subfamily. Dually phosphorylated on Thr-191 and Tyr-193, which activates the enzyme. As to expression, expressed in leaves and panicles.

It carries out the reaction L-seryl-[protein] + ATP = O-phospho-L-seryl-[protein] + ADP + H(+). The catalysed reaction is L-threonyl-[protein] + ATP = O-phospho-L-threonyl-[protein] + ADP + H(+). With respect to regulation, activated by threonine and tyrosine phosphorylation. The protein is Mitogen-activated protein kinase 4 (MPK4) of Oryza sativa subsp. japonica (Rice).